Consider the following 525-residue polypeptide: Light-independent protochlorophyllide reductase subunit B (525 aa).

Aspartate 36 contacts [4Fe-4S] cluster. The active-site Proton donor is aspartate 290. 425 to 426 (GL) is a substrate binding site.

This sequence belongs to the ChlB/BchB/BchZ family. Protochlorophyllide reductase is composed of three subunits; ChlL, ChlN and ChlB. Forms a heterotetramer of two ChlB and two ChlN subunits. The cofactor is [4Fe-4S] cluster.

It carries out the reaction chlorophyllide a + oxidized 2[4Fe-4S]-[ferredoxin] + 2 ADP + 2 phosphate = protochlorophyllide a + reduced 2[4Fe-4S]-[ferredoxin] + 2 ATP + 2 H2O. The protein operates within porphyrin-containing compound metabolism; chlorophyll biosynthesis (light-independent). Component of the dark-operative protochlorophyllide reductase (DPOR) that uses Mg-ATP and reduced ferredoxin to reduce ring D of protochlorophyllide (Pchlide) to form chlorophyllide a (Chlide). This reaction is light-independent. The NB-protein (ChlN-ChlB) is the catalytic component of the complex. This is Light-independent protochlorophyllide reductase subunit B from Prochlorococcus marinus (strain MIT 9312).